A 270-amino-acid polypeptide reads, in one-letter code: Dermonecrotic toxin LhSicTox-alphaIA2aiii (270 aa).

His-2 is an active-site residue. Positions 22 and 24 each coordinate Mg(2+). His-38 acts as the Nucleophile in catalysis. 2 disulfides stabilise this stretch: Cys-42–Cys-48 and Cys-44–Cys-187. Asp-82 provides a ligand contact to Mg(2+).

Belongs to the arthropod phospholipase D family. Class II subfamily. Requires Mg(2+) as cofactor. In terms of tissue distribution, expressed by the venom gland.

It localises to the secreted. It carries out the reaction an N-(acyl)-sphingosylphosphocholine = an N-(acyl)-sphingosyl-1,3-cyclic phosphate + choline. The catalysed reaction is an N-(acyl)-sphingosylphosphoethanolamine = an N-(acyl)-sphingosyl-1,3-cyclic phosphate + ethanolamine. It catalyses the reaction a 1-acyl-sn-glycero-3-phosphocholine = a 1-acyl-sn-glycero-2,3-cyclic phosphate + choline. The enzyme catalyses a 1-acyl-sn-glycero-3-phosphoethanolamine = a 1-acyl-sn-glycero-2,3-cyclic phosphate + ethanolamine. Functionally, dermonecrotic toxins cleave the phosphodiester linkage between the phosphate and headgroup of certain phospholipids (sphingolipid and lysolipid substrates), forming an alcohol (often choline) and a cyclic phosphate. This toxin acts on sphingomyelin (SM). It may also act on ceramide phosphoethanolamine (CPE), lysophosphatidylcholine (LPC) and lysophosphatidylethanolamine (LPE), but not on lysophosphatidylserine (LPS), and lysophosphatidylglycerol (LPG). It acts by transphosphatidylation, releasing exclusively cyclic phosphate products as second products. Induces dermonecrosis, hemolysis, increased vascular permeability, edema, inflammatory response, and platelet aggregation. This is Dermonecrotic toxin LhSicTox-alphaIA2aiii from Loxosceles hirsuta (Recluse spider).